The chain runs to 450 residues: Beclin-1 (450 aa).

Residue methionine 1 is modified to N-acetylmethionine. Serine 15 and serine 30 each carry phosphoserine. Residues 48-72 (TTAQAKPGETQEEETNSGEEPFIET) are disordered. 3 positions are modified to phosphoserine; by AMPK: serine 90, serine 93, and serine 96. A BH3 motif is present at residues 108–127 (TMENLSRRLKVTGDLFDIMS). Residues 112–159 (LSRRLKVTGDLFDIMSGQTDVDHPLCEECTDTLLDQLDTQLNVTENEC) form an interaction with BCL2 and BCL2L1 region. The residue at position 119 (threonine 119) is a Phosphothreonine; by DAPK1. Residues 142–269 (DTLLDQLDTQ…QLDKLKKTNV (128 aa)) are a coiled coil. The tract at residues 245-450 (DELKSVENQM…AWVSSQFYNK (206 aa)) is evolutionary conserved domain (ECD). Glycyl lysine isopeptide (Lys-Gly) (interchain with G-Cter in ubiquitin) cross-links involve residues lysine 402 and lysine 437. The segment at 425-450 (WTKALKFMLTNLKWGLAWVSSQFYNK) is required for membrane-association.

The protein belongs to the beclin family. In terms of assembly, a homodimeric form is proposed to exist; this metastable form readily transits to ATG14- or UVRAG-containing complexes with BECN1:UVRAG being more stable than BECN1:ATG14. Component of the PI3K (PI3KC3/PI3K-III/class III phosphatidylinositol 3-kinase) complex the core of which is composed of the catalytic subunit PIK3C3, the regulatory subunit PIK3R4 and BECN1 associating with additional regulatory/auxiliary subunits to form alternative complex forms. Alternative complex forms containing a fourth regulatory subunit in a mutually exclusive manner are PI3K complex I (PI3KC3-C1) containing ATG14, and PI3K complex II (PI3KC3-C2) containing UVRAG. PI3KC3-C1 displays a V-shaped architecture with PIK3R4 serving as a bridge between PIK3C3 and the ATG14:BECN1 subcomplex. Both, PI3KC3-C1 and PI3KC3-C2, can associate with further regulatory subunits, such as RUBCN, SH3GLB1/Bif-1 and AMBRA1. PI3KC3-C1 probably associates with PIK3CB. Forms a complex with PPP2CA and AMBRA1; AMBRA1 and BECN1 components of the complex regulate MYC stability via different pathways. Component of the complex, at least composed of LRPPRC, BECN1 and BCL2; the interactions prevent BECN1 from forming an autophagy-inducing complex with PIK3C3. Interacts with AMBRA1, GOPC, GRID2. Interacts with BCL2 and BCL2L1 isoform Bcl-X(L); the interaction inhibits BECN1 function in promoting autophagy by interfering with the formation of the PI3K complex. Interacts with cytosolic HMGB1; inhibits the interaction of BECN1 and BCL2 leading to promotion of autophagy. Interacts with USP10, USP13, VMP1, DAPK1, RAB39A. Interacts with the poly-Gln domain of ATXN3; the interaction causes deubiquitination at Lys-402 and stabilizes BECN1. Interacts with SLAMF1. Interacts with TRIM5; the interaction causes activation of BECN1 by causing its dissociation from its inhibitors BCL2 and TAB2. Interacts with active ULK1 (phosphorylated on 'Ser-317') and MEFV simultaneously. Interacts with WDR81 and WDR91; negatively regulates the PI3 kinase/PI3K activity associated with endosomal membranes. Interacts with LAPTM4B; competes with EGFR for LAPTM4B binding; regulates EGFR activity. Interacts with TRIM50. Interacts with TRIM16. Interacts with ATG14; this interaction is increased in the absence of TMEM39A. Interacts with WASHC1; preventing interaction with AMBRA1 and the DCX(AMBRA1) complex and subsequent ubiquitination. Interacts with TRIM17. Interacts with BCL2L10/BCL-B (via BH1 domain). Interacts with SH3BGRL. Interacts with IRGM; enhancing BECN1-interacting partners and influencing the composition of the BECN1 complex. Interacts with ARMC3. Interacts with LRPPRC. In terms of processing, phosphorylation at Thr-119 by DAPK1 reduces its interaction with BCL2 and BCL2L1 and promotes induction of autophagy. In response to autophagic stimuli, phosphorylated at serine residues by AMPK in an ATG14-dependent manner, and this phosphorylation is critical for maximally efficient autophagy. Polyubiquitinated by NEDD4, both with 'Lys-11'- and 'Lys-63'-linkages. 'Lys-11'-linked polyubiquitination leads to degradation and is enhanced when the stabilizing interaction partner VPS34 is depleted. Deubiquitinated by USP10 and USP13, leading to stabilize the PIK3C3/VPS34-containing complexes. Polyubiquitinated at Lys-402 with 'Lys-48'-linkages. 'Lys-48'-linked polyubiquitination of Lys-402 leads to degradation. Deubiquitinated by ATXN3, leading to stabilization. Ubiquitinated at Lys-437 via 'Lys-63'-linkage by the DCX(AMBRA1) complex, thereby increasing the association between BECN1 and PIK3C3 to promote PIK3C3 activity. 'Lys-48'-linked ubiquitination by RNF216 leads to proteasomal degradation and autophagy inhibition. Post-translationally, proteolytically processed by caspases including CASP8 and CASP3; the C-terminal fragments lack autophagy-inducing capacity and are proposed to induce apoptosis. Thus the cleavage is proposed to be an determinant to switch from autophagy to apoptosis pathways affecting cellular homeostasis including viral infections and survival of tumor cells.

Its subcellular location is the cytoplasm. It localises to the golgi apparatus. The protein resides in the trans-Golgi network membrane. It is found in the endosome membrane. The protein localises to the endoplasmic reticulum membrane. Its subcellular location is the mitochondrion membrane. It localises to the cytoplasmic vesicle. The protein resides in the autophagosome. It is found in the mitochondrion. The protein localises to the nucleus. Plays a central role in autophagy. Acts as a core subunit of the PI3K complex that mediates formation of phosphatidylinositol 3-phosphate; different complex forms are believed to play a role in multiple membrane trafficking pathways: PI3KC3-C1 is involved in initiation of autophagosomes and PI3KC3-C2 in maturation of autophagosomes and endocytosis. Involved in regulation of degradative endocytic trafficking and required for the abscission step in cytokinesis, probably in the context of PI3KC3-C2. Essential for the formation of PI3KC3-C2 but not PI3KC3-C1 PI3K complex forms. Involved in endocytosis. May play a role in antiviral host defense. In terms of biological role, beclin-1-C 35 kDa localized to mitochondria can promote apoptosis; it induces the mitochondrial translocation of BAX and the release of proapoptotic factors. In Pongo abelii (Sumatran orangutan), this protein is Beclin-1 (BECN1).